Reading from the N-terminus, the 266-residue chain is Norfluorocurarine synthase 1 (266 aa).

Positions 11 to 121 (HFVLVHGAGH…VMPDAVHPPS (111 aa)) constitute an AB hydrolase-1 domain. Residues serine 86, aspartate 216, and histidine 244 contribute to the active site.

This sequence belongs to the AB hydrolase superfamily. Homodimer. In terms of tissue distribution, mainly expressed in roots.

It catalyses the reaction 17-dehydropreakuammicine + H2O = norfluorocurarine + methanol + CO2. It participates in alkaloid biosynthesis. Hydrolase involved in the biosynthesis of curare monoterpene indole alkaloids (MIAs), natural products such as strychnine, a neurotoxic compound used as a pesticide to control rodents, and its pharmacologically active derivatives, including brucine, used to regulate blood pressure. Curare alkaloids act as animal glycine receptor antagonists. Catalyzes the conversion of dehydropreakuammicine to norfluorocurarine. This chain is Norfluorocurarine synthase 1, found in Strychnos nux-vomica (Poison nut).